The chain runs to 474 residues: Siroheme synthase (474 aa).

A precorrin-2 dehydrogenase /sirohydrochlorin ferrochelatase region spans residues 1-202 (MEYLPIFIDL…GRPKEANKVL (202 aa)). NAD(+) contacts are provided by residues 22 to 23 (AV) and 41 to 42 (PA). Phosphoserine is present on serine 126. A uroporphyrinogen-III C-methyltransferase region spans residues 218-474 (GHVTLVGAGP…YLINSIINLI (257 aa)). S-adenosyl-L-methionine is bound at residue proline 227. Aspartate 250 acts as the Proton acceptor in catalysis. The active-site Proton donor is lysine 272. Residues 303–305 (GGD), isoleucine 308, 333–334 (TA), methionine 385, and glycine 414 each bind S-adenosyl-L-methionine.

In the N-terminal section; belongs to the precorrin-2 dehydrogenase / sirohydrochlorin ferrochelatase family. This sequence in the C-terminal section; belongs to the precorrin methyltransferase family.

The enzyme catalyses uroporphyrinogen III + 2 S-adenosyl-L-methionine = precorrin-2 + 2 S-adenosyl-L-homocysteine + H(+). It carries out the reaction precorrin-2 + NAD(+) = sirohydrochlorin + NADH + 2 H(+). The catalysed reaction is siroheme + 2 H(+) = sirohydrochlorin + Fe(2+). It functions in the pathway cofactor biosynthesis; adenosylcobalamin biosynthesis; precorrin-2 from uroporphyrinogen III: step 1/1. It participates in cofactor biosynthesis; adenosylcobalamin biosynthesis; sirohydrochlorin from precorrin-2: step 1/1. The protein operates within porphyrin-containing compound metabolism; siroheme biosynthesis; precorrin-2 from uroporphyrinogen III: step 1/1. Its pathway is porphyrin-containing compound metabolism; siroheme biosynthesis; siroheme from sirohydrochlorin: step 1/1. It functions in the pathway porphyrin-containing compound metabolism; siroheme biosynthesis; sirohydrochlorin from precorrin-2: step 1/1. Its function is as follows. Multifunctional enzyme that catalyzes the SAM-dependent methylations of uroporphyrinogen III at position C-2 and C-7 to form precorrin-2 via precorrin-1. Then it catalyzes the NAD-dependent ring dehydrogenation of precorrin-2 to yield sirohydrochlorin. Finally, it catalyzes the ferrochelation of sirohydrochlorin to yield siroheme. This is Siroheme synthase from Blochmanniella pennsylvanica (strain BPEN).